Consider the following 376-residue polypeptide: Cyclin-D3-1 (376 aa).

The tract at residues 298–376 (KRKSHDSSSS…HLPWAIVATP (79 aa)) is disordered. Residues 321 to 349 (NSDESSNDSWSASSCNPPTSSSSPQQQPP) are compositionally biased toward low complexity. A compositionally biased stretch (basic and acidic residues) spans 354–363 (RGAEENEKKK).

This sequence belongs to the cyclin family. Cyclin D subfamily. In terms of assembly, interacts with the C-terminal domain of CDKA-1. Interacts with KRP1/ICK1. Interacts with KRP6. Phosphorylated. In terms of tissue distribution, highly expressed in roots and at lower levels in leaves and flowers. Expressed in vegetative shoot meristem and inflorescence.

Functionally, involved in the control of the cell cycle at the G1/S (start) transition. Activates the G1/S phase transition in response to cytokinin hormone signal, but declines in response to sucrose starvation leading to G1 arrest. Involved in the induction of mitotic cell division. Plays an important role in the switch from cell proliferation to the final stages of differentiation during plant development. May not be involved in the activation of cell cycle in the root apical meristem (RAM) in the early phase of seed germination. Promotes divisions in the guard cells (GCs) after the guard mother cells (GMC) symmetric division. The sequence is that of Cyclin-D3-1 (CYCD3-1) from Arabidopsis thaliana (Mouse-ear cress).